Reading from the N-terminus, the 195-residue chain is Dephospho-CoA kinase (195 aa).

A DPCK domain is found at 2–195; that stretch reads IIGLTGGIGV…DIVDSLSLSS (194 aa). 10–15 serves as a coordination point for ATP; that stretch reads GVGKSF.

Belongs to the CoaE family.

It is found in the cytoplasm. The enzyme catalyses 3'-dephospho-CoA + ATP = ADP + CoA + H(+). The protein operates within cofactor biosynthesis; coenzyme A biosynthesis; CoA from (R)-pantothenate: step 5/5. Functionally, catalyzes the phosphorylation of the 3'-hydroxyl group of dephosphocoenzyme A to form coenzyme A. The protein is Dephospho-CoA kinase of Wolbachia sp. subsp. Brugia malayi (strain TRS).